The primary structure comprises 129 residues: Small ribosomal subunit protein uS11 (129 aa).

This sequence belongs to the universal ribosomal protein uS11 family. In terms of assembly, part of the 30S ribosomal subunit. Interacts with proteins S7 and S18. Binds to IF-3.

Functionally, located on the platform of the 30S subunit, it bridges several disparate RNA helices of the 16S rRNA. Forms part of the Shine-Dalgarno cleft in the 70S ribosome. In Rhodopseudomonas palustris (strain BisB5), this protein is Small ribosomal subunit protein uS11.